Reading from the N-terminus, the 494-residue chain is Cheilanthifoline synthase (494 aa).

The helical transmembrane segment at 4–24 (TIWLIISTVIIVLGIAKFLLG) threads the bilayer. Heme is bound at residue Cys-437.

It belongs to the cytochrome P450 family. The cofactor is heme. In terms of tissue distribution, expressed in roots and at lower levels in stems, leaves and plantlets.

The protein resides in the endoplasmic reticulum membrane. The catalysed reaction is (S)-scoulerine + reduced [NADPH--hemoprotein reductase] + O2 = (S)-cheilanthifoline + oxidized [NADPH--hemoprotein reductase] + 2 H2O + H(+). In terms of biological role, methylenedioxy bridge-forming cytochrome P450 involved in the biosynthesis of isoquinoline alkaloids. Converts (S)-scoulerine into (S)-cheilanthifoline, a precursor of sanguinarine. Catalyzes an oxidative reaction that does not incorporate oxygen into the product. In Argemone mexicana (Mexican prickly poppy), this protein is Cheilanthifoline synthase.